We begin with the raw amino-acid sequence, 124 residues long: Small ribosomal subunit protein uS13 (124 aa).

Residues 99–124 (RGQRTRTNARTRKGPRKTVGVMRKKS) are disordered. Positions 101–124 (QRTRTNARTRKGPRKTVGVMRKKS) are enriched in basic residues.

Belongs to the universal ribosomal protein uS13 family. In terms of assembly, part of the 30S ribosomal subunit. Forms a loose heterodimer with protein S19. Forms two bridges to the 50S subunit in the 70S ribosome.

Its function is as follows. Located at the top of the head of the 30S subunit, it contacts several helices of the 16S rRNA. In the 70S ribosome it contacts the 23S rRNA (bridge B1a) and protein L5 of the 50S subunit (bridge B1b), connecting the 2 subunits; these bridges are implicated in subunit movement. Contacts the tRNAs in the A and P-sites. This Caldicellulosiruptor bescii (strain ATCC BAA-1888 / DSM 6725 / KCTC 15123 / Z-1320) (Anaerocellum thermophilum) protein is Small ribosomal subunit protein uS13.